The following is a 161-amino-acid chain: 3-isopropylmalate dehydratase small subunit (161 aa).

It belongs to the LeuD family. LeuD type 2 subfamily. Heterodimer of LeuC and LeuD.

It carries out the reaction (2R,3S)-3-isopropylmalate = (2S)-2-isopropylmalate. It participates in amino-acid biosynthesis; L-leucine biosynthesis; L-leucine from 3-methyl-2-oxobutanoate: step 2/4. Its function is as follows. Catalyzes the isomerization between 2-isopropylmalate and 3-isopropylmalate, via the formation of 2-isopropylmaleate. The polypeptide is 3-isopropylmalate dehydratase small subunit (leuD) (Caldanaerobacter subterraneus subsp. tengcongensis (strain DSM 15242 / JCM 11007 / NBRC 100824 / MB4) (Thermoanaerobacter tengcongensis)).